The primary structure comprises 1011 residues: Beta-galactosidase A (1011 aa).

An N-terminal signal peptide occupies residues 1–19 (MKLLSSWVVAALAAQAAGA). Substrate contacts are provided by residues Tyr96, 140–142 (NAE), and Asn199. Glu200 acts as the Proton donor in catalysis. Intrachain disulfides connect Cys205-Cys206 and Cys267-Cys316. Catalysis depends on Glu299, which acts as the Nucleophile. Tyr365 is a binding site for substrate. N-linked (GlcNAc...) asparagine glycans are attached at residues Asn374, Asn456, Asn625, Asn707, Asn763, Asn780, and Asn917.

Belongs to the glycosyl hydrolase 35 family. As to quaternary structure, monomer.

The protein localises to the secreted. It catalyses the reaction Hydrolysis of terminal non-reducing beta-D-galactose residues in beta-D-galactosides.. Functionally, cleaves beta-linked terminal galactosyl residues from gangliosides, glycoproteins, and glycosaminoglycans. Has high in vitro transglycosylation activity with p-nitrophenyl-beta-D-galactopyranoside, methyl-beta-D-galactopyranoside or lactose as a donor and galactose as an acceptor. The chain is Beta-galactosidase A (lacA) from Penicillium sp.